The primary structure comprises 2413 residues: Pre-mRNA-splicing factor 8 (2413 aa).

2 stretches are compositionally biased toward pro residues: residues M1 to G10 and L19 to G28. Residues M1–E60 form a disordered region. Residues Q253–N543 are SNU114/CWC21 interacting domain (SCwid). The reverse transcriptase homology domain stretch occupies residues V885–L1375. Residues N1376 to F1649 form a linker region. Residues M1585–L1598 are important for branch point selection. Residues L1653–Q1824 form a restriction endonuclease homology domain region. The tract at residues N1839–S2092 is RNase H homology domain. Positions V2182–G2311 constitute an MPN domain.

Component of the U4/U6-U5 tri-snRNP complex composed of the U4, U6 and U5 snRNAs and at least PRP3, PRP4, PRP6, PRP8, PRP18, PRP31, PRP38, SNU13, SNU23, SNU66, SNU114, SPP381, SMB1, SMD1, SMD2, SMD3, SMX2, SMX3, LSM2, LSM3, LSM4, LSM5, LSM6, LSM7, LSM8, BRR2 and DIB1. Belongs to the CWC complex (or CEF1-associated complex), a spliceosome sub-complex reminiscent of a late-stage spliceosome composed of the U2, U5 and U6 snRNAs and at least BUD13, BUD31, BRR2, CDC40, CEF1, CLF1, CUS1, CWC2, CWC15, CWC21, CWC22, CWC23, CWC24, CWC25, CWC27, ECM2, HSH155, IST3, ISY1, LEA1, MSL1, NTC20, PRP8, PRP9, PRP11, PRP19, PRP21, PRP22, PRP45, PRP46, SLU7, SMB1, SMD1, SMD2, SMD3, SMX2, SMX3, SNT309, SNU114, SPP2, SYF1, SYF2, RSE1 and YJU2. Interacts with PRP40 and SNP1. Interacts (via SCwid domain) with CWC21. Interacts (via SCwid domain) with SNU114 (via N-terminus). Interacts (via RNase H homology domain and MPN domain) with BRR2; this modulates BRR2 ATPase and helicase activity. Interacts (via RNase H homology domain) with AAR2. AAR2 and BRR2 compete for PRP8 binding, and during U5 snRNP maturation BRR2 displaces the initially bound AAR2. Is associated with snRNP U5, together with SNU114 and BRR2.

The protein localises to the nucleus. Functions as a scaffold that mediates the ordered assembly of spliceosomal proteins and snRNAs. Required for association of BRR2 with the spliceosomal U5 snRNP, and the subsequent assembly of the U4/U6-U5 tri-snRNP complex. Functions as a scaffold that positions spliceosomal U2, U5 and U6 snRNAs at splice sites on pre-mRNA substrates, so that splicing can occur. Interacts with both the 5' and the 3' splice site, as well as the branch region. Has a role in branch site-3' splice site selection. Associates with the branch site-3' splice 3'-exon region. Also has a role in cell cycle. This Saccharomyces cerevisiae (strain ATCC 204508 / S288c) (Baker's yeast) protein is Pre-mRNA-splicing factor 8 (PRP8).